The following is a 217-amino-acid chain: Large ribosomal subunit protein uL3 (217 aa).

The protein belongs to the universal ribosomal protein uL3 family. Part of the 50S ribosomal subunit. Forms a cluster with proteins L14 and L19.

Its function is as follows. One of the primary rRNA binding proteins, it binds directly near the 3'-end of the 23S rRNA, where it nucleates assembly of the 50S subunit. The chain is Large ribosomal subunit protein uL3 from Mycolicibacterium paratuberculosis (strain ATCC BAA-968 / K-10) (Mycobacterium paratuberculosis).